Consider the following 670-residue polypeptide: E3 ubiquitin-protein ligase TRAF7 (670 aa).

Disordered stretches follow at residues 1–37 (MSSG…FGPA) and 49–97 (GTST…SLHS). 2 stretches are compositionally biased toward polar residues: residues 15–31 (GPSN…TRME) and 49–67 (GTST…STLA). Ser61, Ser88, and Ser91 each carry phosphoserine. The RING-type zinc-finger motif lies at 131–165 (CQLCCSVFKDPVITTCGHTFCRRCALKSEKCPVDN). A TRAF-type zinc finger spans residues 222-276 (HEGSCDYRPVRCPNNPSCPPLLRMNLEAHLKECEHIKCPHSKYGCTFIGNQDTYE). WD repeat units lie at residues 394–433 (GHQG…KCQK), 437–474 (GHDG…KVNT), 477–513 (AHDN…LKLK), 515–554 (ELTG…CIHV), 557–594 (TSGG…QVRT), 597–638 (GHVG…CTQT), and 641–669 (RHQG…KVWT).

The protein belongs to the WD repeat TRAF7 family. As to quaternary structure, homodimer. Interacts with MAP3K3 and promotes the kinase activity of this enzyme. In terms of processing, phosphorylated by MAP3K3. Post-translationally, ubiquitinates itself upon phosphorylation. Ubiquitously expressed with high levels in skeletal muscle, heart, colon, spleen, kidney, liver and placenta.

Its subcellular location is the cytoplasmic vesicle. The protein resides in the cytoplasm. It localises to the nucleus. It catalyses the reaction S-ubiquitinyl-[E2 ubiquitin-conjugating enzyme]-L-cysteine + [acceptor protein]-L-lysine = [E2 ubiquitin-conjugating enzyme]-L-cysteine + N(6)-ubiquitinyl-[acceptor protein]-L-lysine.. Its pathway is protein modification; protein ubiquitination. Functionally, E3 ubiquitin and SUMO-protein ligase that plays a role in different biological processes such as innate immunity, inflammation or apoptosis. Potentiates MAP3K3-mediated activation of JUN/AP1 and DDIT3 transcriptional regulators. Negatively regulates MYB transcriptional activity by sequestering it to the cytosol via SUMOylation. Plays a role in the phosphorylation of MAPK1 and/or MAPK3, probably via its interaction with MAP3K3. Negatively regulates RLR-mediated innate immunity by promoting 'Lys-48'-linked ubiquitination of TBK1 through its RING domain to inhibit the cellular antiviral response. Promotes 'Lys-29'-linked polyubiquitination of NEMO/IKBKG and RELA leading to targeting these two proteins to lysosomal degradative pathways, reducing the transcriptional activity of NF-kappa-B. The chain is E3 ubiquitin-protein ligase TRAF7 (TRAF7) from Homo sapiens (Human).